Here is a 136-residue protein sequence, read N- to C-terminus: Basic phospholipase A2 Tgc-K49 (136 aa).

Positions 1–15 (MRTLWIVAVLLVGEG) are cleaved as a signal peptide. 7 disulfides stabilise this stretch: Cys-41-Cys-130, Cys-43-Cys-59, Cys-58-Cys-110, Cys-64-Cys-136, Cys-65-Cys-103, Cys-72-Cys-96, and Cys-90-Cys-101. His-62 is an active-site residue. The active site involves Asp-104.

This sequence belongs to the phospholipase A2 family. Group II subfamily. K49 sub-subfamily. In terms of tissue distribution, expressed by the venom gland.

The protein localises to the secreted. The enzyme catalyses a 1,2-diacyl-sn-glycero-3-phosphocholine + H2O = a 1-acyl-sn-glycero-3-phosphocholine + a fatty acid + H(+). PLA2 catalyzes the calcium-dependent hydrolysis of the 2-acyl groups in 3-sn-phosphoglycerides. This chain is Basic phospholipase A2 Tgc-K49, found in Trimeresurus gracilis (Kikuchi habu).